A 564-amino-acid polypeptide reads, in one-letter code: MFS-type transporter grgE (564 aa).

Positions 1-10 (MAENQVDPKR) are enriched in basic and acidic residues. The segment at 1 to 52 (MAENQVDPKRNLPLYGAADESTSATDKEDEVENVRQNGSAPPIEEARESNEA) is disordered. The N-linked (GlcNAc...) asparagine glycan is linked to Asn37. 7 helical membrane-spanning segments follow: residues 60–80 (HGLS…IISL), 101–118 (KVSW…GFQT), 131–151 (TTFL…GVAP), 161–181 (AIAG…IAFS), 192–212 (GLVG…GGAF), 220–240 (WCFY…LIFF), and 262–282 (LVGV…LQYG). A glycan (N-linked (GlcNAc...) asparagine) is linked at Asn289. The next 7 helical transmembrane spans lie at 293-313 (VIGL…WEYY), 329-349 (ALWA…ILLY), 368-388 (VRNL…GAFV), 392-412 (GIAT…TGLI), 425-445 (IGYQ…PMNI), 462-482 (IFLA…SAFV), and 531-551 (TFAI…FTPW).

Belongs to the major facilitator superfamily.

It is found in the membrane. Functionally, MFS-type transporter; part of the gene cluster that mediates the biosynthesis of gregatin A, a fungal polyketide featuring an alkylated furanone core. The polypeptide is MFS-type transporter grgE (Penicillium sp).